We begin with the raw amino-acid sequence, 95 residues long: Integration host factor subunit beta (95 aa).

The protein belongs to the bacterial histone-like protein family. Heterodimer of an alpha and a beta chain.

In terms of biological role, this protein is one of the two subunits of integration host factor, a specific DNA-binding protein that functions in genetic recombination as well as in transcriptional and translational control. This is Integration host factor subunit beta from Colwellia psychrerythraea (strain 34H / ATCC BAA-681) (Vibrio psychroerythus).